A 189-amino-acid chain; its full sequence is Ribosome maturation factor RimM (189 aa).

In terms of domain architecture, PRC barrel spans 96-169 (EDEFFQTDLI…TLLVEPYAAG (74 aa)). The disordered stretch occupies residues 170–189 (LIADDEDERPQNEKKKPKKS).

This sequence belongs to the RimM family. Binds ribosomal protein uS19.

It is found in the cytoplasm. Functionally, an accessory protein needed during the final step in the assembly of 30S ribosomal subunit, possibly for assembly of the head region. Essential for efficient processing of 16S rRNA. May be needed both before and after RbfA during the maturation of 16S rRNA. It has affinity for free ribosomal 30S subunits but not for 70S ribosomes. The chain is Ribosome maturation factor RimM from Brucella anthropi (strain ATCC 49188 / DSM 6882 / CCUG 24695 / JCM 21032 / LMG 3331 / NBRC 15819 / NCTC 12168 / Alc 37) (Ochrobactrum anthropi).